The chain runs to 443 residues: Arginine biosynthesis bifunctional protein ArgJ, mitochondrial (443 aa).

Thr179, Lys206, Thr217, Glu303, Asn438, and Ser443 together coordinate substrate. The active-site Nucleophile is the Thr217.

The protein belongs to the ArgJ family. In terms of assembly, heterodimer of an alpha and a beta chain. Post-translationally, the alpha and beta chains are autoproteolytically processed from a single precursor protein within the mitochondrion.

The protein resides in the mitochondrion matrix. The enzyme catalyses N(2)-acetyl-L-ornithine + L-glutamate = N-acetyl-L-glutamate + L-ornithine. It carries out the reaction L-glutamate + acetyl-CoA = N-acetyl-L-glutamate + CoA + H(+). Its pathway is amino-acid biosynthesis; L-arginine biosynthesis; L-ornithine and N-acetyl-L-glutamate from L-glutamate and N(2)-acetyl-L-ornithine (cyclic): step 1/1. It participates in amino-acid biosynthesis; L-arginine biosynthesis; N(2)-acetyl-L-ornithine from L-glutamate: step 1/4. Its function is as follows. Catalyzes two activities which are involved in the cyclic version of arginine biosynthesis: the synthesis of acetylglutamate from glutamate and acetyl-CoA, and of ornithine by transacetylation between acetylornithine and glutamate. This chain is Arginine biosynthesis bifunctional protein ArgJ, mitochondrial, found in Eremothecium gossypii (strain ATCC 10895 / CBS 109.51 / FGSC 9923 / NRRL Y-1056) (Yeast).